Reading from the N-terminus, the 604-residue chain is ATPase family AAA domain-containing protein 3A homolog (604 aa).

Positions 1–50 (MSWLLGRNRQQPQPDQTAGFSEGGGAADPEGRTAGEKSGDSQLSRAERKA) are disordered. Polar residues predominate over residues 8–19 (NRQQPQPDQTAG). The segment covering 29-50 (PEGRTAGEKSGDSQLSRAERKA) has biased composition (basic and acidic residues). The stretch at 62 to 221 (ERAADAAKTL…INLEKIRLKA (160 aa)) forms a coiled coil. Residue 358–365 (GPPGTGKT) participates in ATP binding.

In terms of assembly, can form homooligomers.

Its subcellular location is the mitochondrion inner membrane. It localises to the mitochondrion matrix. The protein localises to the mitochondrion nucleoid. In terms of biological role, required to maintain the proper number of mitochondria in neurons and muscles. The polypeptide is ATPase family AAA domain-containing protein 3A homolog (Drosophila melanogaster (Fruit fly)).